The primary structure comprises 342 residues: MKPLEYCNGVLKLLDQTLLPGEQKIVELKNYIEVADAIKNMIVRGAPAIGVTAAYGVAIASKAINTDSKEEFFAELAKVCDIIKSTRPTAVNLFWAVDRVYSRAVSNRDKTIEEIKKLIEEEAYLMEKEDIESNRSIGRFGNELIKENWTILTHCNAGALATCDYGTALGVIRAAHESGKNIQVFADETRPYLQGARLTAWELMQDNIPVTLICDNMAGHFMKEGLIDCVIVGADRIALNGDTANKIGTYSLAVLAKENNIPFYVAAPTTTIDFSIETGEQIPIEERSPAEITHIKGIRIAPEGVKVRNPAFDVTPNKYISAIITEKGIIYPPYDENIKKYR.

Residues 44–46 (RGA), Arg87, and Gln194 each bind substrate. Asp235 acts as the Proton donor in catalysis. 245-246 (NK) contributes to the substrate binding site.

Belongs to the eIF-2B alpha/beta/delta subunits family. MtnA subfamily.

The catalysed reaction is 5-(methylsulfanyl)-alpha-D-ribose 1-phosphate = 5-(methylsulfanyl)-D-ribulose 1-phosphate. It functions in the pathway amino-acid biosynthesis; L-methionine biosynthesis via salvage pathway; L-methionine from S-methyl-5-thio-alpha-D-ribose 1-phosphate: step 1/6. In terms of biological role, catalyzes the interconversion of methylthioribose-1-phosphate (MTR-1-P) into methylthioribulose-1-phosphate (MTRu-1-P). This chain is Methylthioribose-1-phosphate isomerase, found in Acetivibrio thermocellus (strain ATCC 27405 / DSM 1237 / JCM 9322 / NBRC 103400 / NCIMB 10682 / NRRL B-4536 / VPI 7372) (Clostridium thermocellum).